A 439-amino-acid polypeptide reads, in one-letter code: UPF0489 protein C5orf22 homolog (439 aa).

The segment at 163-219 (TTKLENGQSGAKIPKAAQTQDDMQSKADTPCTSSSQPPDGSAASGNISETAKKKADD) is disordered. Residues 179–211 (AQTQDDMQSKADTPCTSSSQPPDGSAASGNISE) are compositionally biased toward polar residues.

Belongs to the UPF0489 family.

The sequence is that of UPF0489 protein C5orf22 homolog from Danio rerio (Zebrafish).